Consider the following 156-residue polypeptide: Small ribosomal subunit protein uS7 (156 aa).

This sequence belongs to the universal ribosomal protein uS7 family. As to quaternary structure, part of the 30S ribosomal subunit. Contacts proteins S9 and S11.

One of the primary rRNA binding proteins, it binds directly to 16S rRNA where it nucleates assembly of the head domain of the 30S subunit. Is located at the subunit interface close to the decoding center, probably blocks exit of the E-site tRNA. In Streptomyces griseus subsp. griseus (strain JCM 4626 / CBS 651.72 / NBRC 13350 / KCC S-0626 / ISP 5235), this protein is Small ribosomal subunit protein uS7.